A 216-amino-acid chain; its full sequence is Small ribosomal subunit protein eS6 (216 aa).

The protein belongs to the eukaryotic ribosomal protein eS6 family.

This is Small ribosomal subunit protein eS6 from Staphylothermus marinus (strain ATCC 43588 / DSM 3639 / JCM 9404 / F1).